The primary structure comprises 193 residues: Ribosomal RNA large subunit methyltransferase E (193 aa).

The S-adenosyl-L-methionine site is built by Gly48, Phe50, Asp67, Asn85, and Asp107. Lys147 acts as the Proton acceptor in catalysis.

This sequence belongs to the class I-like SAM-binding methyltransferase superfamily. RNA methyltransferase RlmE family.

The protein resides in the cytoplasm. The catalysed reaction is uridine(2552) in 23S rRNA + S-adenosyl-L-methionine = 2'-O-methyluridine(2552) in 23S rRNA + S-adenosyl-L-homocysteine + H(+). In terms of biological role, specifically methylates the uridine in position 2552 of 23S rRNA at the 2'-O position of the ribose in the fully assembled 50S ribosomal subunit. This chain is Ribosomal RNA large subunit methyltransferase E, found in Borrelia duttonii (strain Ly).